A 62-amino-acid polypeptide reads, in one-letter code: MGSGTATFGKRNSTPTHIRCRRCGRVSYNVKKGYCAACGFGRSRRLRKYRWSKKWKKKKNAH.

Residues Cys20, Cys23, Cys35, and Cys38 each coordinate Zn(2+). The C4-type zinc-finger motif lies at Cys20 to Cys38.

It belongs to the eukaryotic ribosomal protein eL37 family. In terms of assembly, part of the 50S ribosomal subunit. It depends on Zn(2+) as a cofactor.

In terms of biological role, binds to the 23S rRNA. This is Large ribosomal subunit protein eL37 from Pyrococcus furiosus (strain ATCC 43587 / DSM 3638 / JCM 8422 / Vc1).